Here is a 95-residue protein sequence, read N- to C-terminus: Parvalbumin beta 3 (95 aa).

The residue at position 1 (alanine 1) is an N-acetylalanine. 2 EF-hand domains span residues 39–66 and 77–95; these read FFAIIDQDHSGFIEEDELKLFLQTFSAG and DVDGDGMIGVDEFVALVKA. Aspartate 44, aspartate 46, serine 48, phenylalanine 50, glutamate 52, glutamate 55, aspartate 77, aspartate 79, aspartate 81, methionine 83, and glutamate 88 together coordinate Ca(2+).

Belongs to the parvalbumin family.

Its function is as follows. In muscle, parvalbumin is thought to be involved in relaxation after contraction. It binds two calcium ions. The protein is Parvalbumin beta 3 of Merluccius paradoxus (Deep-water Cape hake).